We begin with the raw amino-acid sequence, 268 residues long: Ribonuclease P protein subunit p30 (268 aa).

Alanine 2 is modified (N-acetylalanine). Serine 251 is subject to Phosphoserine.

This sequence belongs to the eukaryotic/archaeal RNase P protein component 3 family. Component of nuclear RNase P and RNase MRP ribonucleoproteins. RNase P consists of a catalytic RNA moiety and about 10 protein subunits; POP1, POP4, POP5, POP7, RPP14, RPP21, RPP25, RPP30, RPP38 and RPP40. Within the RNase P complex, POP1, POP7 and RPP25 form the 'finger' subcomplex, POP5, RPP14, RPP40 and homodimeric RPP30 form the 'palm' subcomplex, and RPP21, POP4 and RPP38 form the 'wrist' subcomplex. All subunits of the RNase P complex interact with the catalytic RNA. Several subunits of RNase P are also part of the RNase MRP complex. RNase MRP consists of a catalytic RNA moiety and about 8 protein subunits; POP1, POP7, RPP25, RPP30, RPP38, RPP40 and possibly also POP4 and POP5.

Its subcellular location is the nucleus. The protein localises to the nucleolus. Functionally, component of ribonuclease P, a ribonucleoprotein complex that generates mature tRNA molecules by cleaving their 5'-ends. Also a component of the MRP ribonuclease complex, which cleaves pre-rRNA sequences. In Bos taurus (Bovine), this protein is Ribonuclease P protein subunit p30 (RPP30).